We begin with the raw amino-acid sequence, 57 residues long: DNA gyrase inhibitor YacG (57 aa).

Cys10, Cys13, Cys25, and Cys29 together coordinate Zn(2+).

It belongs to the DNA gyrase inhibitor YacG family. As to quaternary structure, interacts with GyrB. It depends on Zn(2+) as a cofactor.

In terms of biological role, inhibits all the catalytic activities of DNA gyrase by preventing its interaction with DNA. Acts by binding directly to the C-terminal domain of GyrB, which probably disrupts DNA binding by the gyrase. This Brucella abortus (strain 2308) protein is DNA gyrase inhibitor YacG.